A 145-amino-acid chain; its full sequence is Zinc finger C2H2 protein ECU06_1150 (145 aa).

The segment at lysine 35–histidine 57 adopts a C2H2-type 1; atypical zinc-finger fold. A C2H2-type 2 zinc finger spans residues phenylalanine 63–histidine 85.

The sequence is that of Zinc finger C2H2 protein ECU06_1150 from Encephalitozoon cuniculi (strain GB-M1) (Microsporidian parasite).